A 2138-amino-acid chain; its full sequence is Conidial yellow pigment biosynthesis polyketide synthase melA (2138 aa).

The segment at 8 to 244 is N-terminal acylcarrier protein transacylase domain (SAT); the sequence is YLFGDQTADF…TRVPIHGPYH (237 aa). Positions 373 to 804 constitute a Ketosynthase family 3 (KS3) domain; the sequence is QSKIAIIGLS…GGNTALMVED (432 aa). Active-site for beta-ketoacyl synthase activity residues include Cys545, His680, and His722. The malonyl-CoA:ACP transacylase (MAT) domain stretch occupies residues 910–1229; that stretch reads FVFTGQGAQY…VSALYMAGIE (320 aa). Ser999 serves as the catalytic For acyl/malonyl transferase activity. Residues 1288 to 1601 form a product template (PT) domain region; sequence SSAAQRVLET…RKILDMALPP (314 aa). An N-terminal hotdog fold region spans residues 1292–1423; it reads QRVLETSGDN…CNIKFFDPSP (132 aa). The 305-residue stretch at 1292–1596 folds into the PKS/mFAS DH domain; sequence QRVLETSGDN…FQGLARKILD (305 aa). Catalysis depends on His1324, which acts as the Proton acceptor; for dehydratase activity. The C-terminal hotdog fold stretch occupies residues 1451 to 1596; the sequence is AHRMKRGMVY…FQGLARKILD (146 aa). Residue Asp1509 is the Proton donor; for dehydratase activity of the active site. Residues 1640–1714 form the Carrier 1 domain; that stretch reads PSMATRALAI…DFKHLLAQMG (75 aa). Residue Ser1674 is modified to O-(pantetheine 4'-phosphoryl)serine. Positions 1712 to 1758 are disordered; that stretch reads QMGPGESSDGSSSEGDMSSAASSTDLSSPNTSGLPTPANEKSMTHGL. Residues 1713 to 1739 are compositionally biased toward low complexity; sequence MGPGESSDGSSSEGDMSSAASSTDLSS. The span at 1740–1758 shows a compositional bias: polar residues; that stretch reads PNTSGLPTPANEKSMTHGL. Residues 1759 to 1836 form the Carrier 2 domain; it reads QGQNDSMRQI…DIETTLDLKP (78 aa). An O-(pantetheine 4'-phosphoryl)serine modification is found at Ser1796. The segment at 1863–2135 is claisen cyclase domain; sequence TQHPPATSIL…ELARFIANSM (273 aa). Residue Ser1953 is the For Claisen cyclase activity of the active site.

It catalyses the reaction 6 malonyl-CoA + acetyl-CoA + 6 H(+) = naphtopyrone YWA1 + 6 CO2 + 7 CoA + H2O. It functions in the pathway pigment biosynthesis. The protein operates within polyketide biosynthesis; heptaketide naphthopyrone YWA1 biosynthesis. Non-reducing polyketide synthase involved in the biosynthesis of a yellow conidial pigment. Probably forms the heptaketide naphthopyrene YWA1 via condensation of acetate units. This chain is Conidial yellow pigment biosynthesis polyketide synthase melA, found in Penicillium expansum (Blue mold rot fungus).